The primary structure comprises 522 residues: UPF0288 protein MTH_1865 (522 aa).

This sequence belongs to the UPF0288 family.

In Methanothermobacter thermautotrophicus (strain ATCC 29096 / DSM 1053 / JCM 10044 / NBRC 100330 / Delta H) (Methanobacterium thermoautotrophicum), this protein is UPF0288 protein MTH_1865.